Reading from the N-terminus, the 300-residue chain is 4-hydroxybenzoate octaprenyltransferase (300 aa).

The next 8 helical transmembrane spans lie at 32-52 (IGTYLLLWPTLWALWLASEGA), 55-75 (LKNLFIFVFGVLLMRSAGCVI), 108-128 (LFGILVGVSFILVLFTNALTI), 149-169 (YLPQVVLGAAFAWGIPMAFAA), 178-198 (AWLLYTATVVWTVAYDTMYAM), 222-242 (AAVAGLQVLTLGVLFMVGAQH), 246-266 (VYYQVSLIIVAVLFVYQQHLI), and 278-298 (FLNNHWVGAAVFLGLVLEFLF).

The protein belongs to the UbiA prenyltransferase family. Mg(2+) is required as a cofactor.

It localises to the cell inner membrane. It carries out the reaction all-trans-octaprenyl diphosphate + 4-hydroxybenzoate = 4-hydroxy-3-(all-trans-octaprenyl)benzoate + diphosphate. It participates in cofactor biosynthesis; ubiquinone biosynthesis. In terms of biological role, catalyzes the prenylation of para-hydroxybenzoate (PHB) with an all-trans polyprenyl group. Mediates the second step in the final reaction sequence of ubiquinone-8 (UQ-8) biosynthesis, which is the condensation of the polyisoprenoid side chain with PHB, generating the first membrane-bound Q intermediate 3-octaprenyl-4-hydroxybenzoate. The protein is 4-hydroxybenzoate octaprenyltransferase of Hahella chejuensis (strain KCTC 2396).